Reading from the N-terminus, the 327-residue chain is COP9 signalosome complex subunit 5 (327 aa).

Residues 52–189 (IKISALALLK…LGAFRTYPKG (138 aa)) enclose the MPN domain. Zn(2+) contacts are provided by His135, His137, and Asp148. Positions 135–148 (HSHPGYGCWLSGID) match the JAMM motif motif. Phosphoserine occurs at positions 300 and 302. Residue Thr303 is modified to Phosphothreonine.

This sequence belongs to the peptidase M67A family. CSN5 subfamily. As to quaternary structure, component of the CSN complex, probably composed of CSN1b, alien/CSN2, CSN3, CSN4, CSN5, CSN6, CSN7 and CSN8. Interacts directly with CSN2. Also exists as monomeric form. Interacts via its MPN domain with Trc8. The cofactor is a divalent metal cation. Expressed in the optic lobe neuropil.

It localises to the cytoplasm. The protein resides in the nucleus. Its function is as follows. Probable protease subunit of the COP9 signalosome complex (CSN), a complex involved in various cellular and developmental processes. The CSN complex is an essential regulator of the ubiquitin (Ubl) conjugation pathway by mediating the deneddylation of the cullin subunits of the SCF-type E3 ligase complexes, leading to decrease the Ubl ligase activity of SCF. In the complex, it probably acts as the catalytic center that mediates the cleavage of Nedd8 from cullins. It however has no metalloprotease activity by itself and requires the other subunits of the CSN complex. The CSN complex plays an essential role in oogenesis and embryogenesis and is required for proper photoreceptor R cell differentiation and promote lamina glial cell migration or axon targeting. It also promotes Ubl-dependent degradation of cyclin E (CycE) during early oogenesis. Also involved in regulation of axis formation by checkpoint-dependent, translational control of Gurken. The polypeptide is COP9 signalosome complex subunit 5 (CSN5) (Drosophila melanogaster (Fruit fly)).